Reading from the N-terminus, the 282-residue chain is Flagellin (282 aa).

It belongs to the bacterial flagellin family.

The protein resides in the secreted. It localises to the bacterial flagellum. Flagellin is the subunit protein which polymerizes to form the filaments of bacterial flagella. The flagellum is required to cause a persistent disease in a murine model of infection. In Brucella melitensis biotype 1 (strain ATCC 23456 / CCUG 17765 / NCTC 10094 / 16M), this protein is Flagellin (fliC).